Reading from the N-terminus, the 123-residue chain is Large ribosomal subunit protein uL29x (123 aa).

It belongs to the universal ribosomal protein uL29 family.

In Arabidopsis thaliana (Mouse-ear cress), this protein is Large ribosomal subunit protein uL29x (RPL35C).